We begin with the raw amino-acid sequence, 229 residues long: Large ribosomal subunit protein uL1 (229 aa).

It belongs to the universal ribosomal protein uL1 family. As to quaternary structure, part of the 50S ribosomal subunit.

Binds directly to 23S rRNA. The L1 stalk is quite mobile in the ribosome, and is involved in E site tRNA release. Functionally, protein L1 is also a translational repressor protein, it controls the translation of the L11 operon by binding to its mRNA. This is Large ribosomal subunit protein uL1 from Desulforamulus reducens (strain ATCC BAA-1160 / DSM 100696 / MI-1) (Desulfotomaculum reducens).